Reading from the N-terminus, the 225-residue chain is Small ribosomal subunit protein uS7 (225 aa).

Belongs to the universal ribosomal protein uS7 family. Component of the small ribosomal subunit. Mature ribosomes consist of a small (40S) and a large (60S) subunit. The 40S subunit contains about 32 different proteins and 1 molecule of RNA (18S). The 60S subunit contains 45 different proteins and 3 molecules of RNA (25S, 5.8S and 5S).

The protein resides in the cytoplasm. Functionally, component of the ribosome, a large ribonucleoprotein complex responsible for the synthesis of proteins in the cell. The small ribosomal subunit (SSU) binds messenger RNAs (mRNAs) and translates the encoded message by selecting cognate aminoacyl-transfer RNA (tRNA) molecules. The large subunit (LSU) contains the ribosomal catalytic site termed the peptidyl transferase center (PTC), which catalyzes the formation of peptide bonds, thereby polymerizing the amino acids delivered by tRNAs into a polypeptide chain. The nascent polypeptides leave the ribosome through a tunnel in the LSU and interact with protein factors that function in enzymatic processing, targeting, and the membrane insertion of nascent chains at the exit of the ribosomal tunnel. The polypeptide is Small ribosomal subunit protein uS7 (RPS5) (Candida albicans (strain SC5314 / ATCC MYA-2876) (Yeast)).